Consider the following 668-residue polypeptide: DNA ligase (668 aa).

NAD(+) contacts are provided by residues 34–38 (DAEYD), 83–84 (SL), and Glu117. The active-site N6-AMP-lysine intermediate is Lys119. 4 residues coordinate NAD(+): Arg140, Glu177, Lys293, and Lys317. Residues Cys411, Cys414, Cys429, and Cys434 each contribute to the Zn(2+) site. Residues 591–668 (RVGGRFTGKT…SEDDFLELMQ (78 aa)) form the BRCT domain.

The protein belongs to the NAD-dependent DNA ligase family. LigA subfamily. The cofactor is Mg(2+). Requires Mn(2+) as cofactor.

The catalysed reaction is NAD(+) + (deoxyribonucleotide)n-3'-hydroxyl + 5'-phospho-(deoxyribonucleotide)m = (deoxyribonucleotide)n+m + AMP + beta-nicotinamide D-nucleotide.. Functionally, DNA ligase that catalyzes the formation of phosphodiester linkages between 5'-phosphoryl and 3'-hydroxyl groups in double-stranded DNA using NAD as a coenzyme and as the energy source for the reaction. It is essential for DNA replication and repair of damaged DNA. In Citrifermentans bemidjiense (strain ATCC BAA-1014 / DSM 16622 / JCM 12645 / Bem) (Geobacter bemidjiensis), this protein is DNA ligase.